A 384-amino-acid chain; its full sequence is Ribosomal RNA large subunit methyltransferase G (384 aa).

Belongs to the methyltransferase superfamily. RlmG family.

Its subcellular location is the cytoplasm. It catalyses the reaction guanosine(1835) in 23S rRNA + S-adenosyl-L-methionine = N(2)-methylguanosine(1835) in 23S rRNA + S-adenosyl-L-homocysteine + H(+). Its function is as follows. Specifically methylates the guanine in position 1835 (m2G1835) of 23S rRNA. The polypeptide is Ribosomal RNA large subunit methyltransferase G (Pseudoalteromonas atlantica (strain T6c / ATCC BAA-1087)).